A 275-amino-acid chain; its full sequence is Cis-2,3-dihydrobiphenyl-2,3-diol dehydrogenase (275 aa).

9–33 lines the NAD(+) pocket; it reads LITGGASGLGRALVDRFVAEAKVAV. S140 contacts substrate. Catalysis depends on Y153, which acts as the Proton acceptor.

It belongs to the short-chain dehydrogenases/reductases (SDR) family.

It carries out the reaction (2R,3S)-3-phenylcyclohexa-3,5-diene-1,2-diol + NAD(+) = biphenyl-2,3-diol + NADH + H(+). It participates in xenobiotic degradation; biphenyl degradation; 2-hydroxy-2,4-pentadienoate and benzoate from biphenyl: step 2/4. This Metapseudomonas furukawaii (Pseudomonas furukawaii) protein is Cis-2,3-dihydrobiphenyl-2,3-diol dehydrogenase (bphB).